The sequence spans 209 residues: Inducible T-cell costimulator (209 aa).

The first 19 residues, 1 to 19, serve as a signal peptide directing secretion; it reads MKSDLRYFFLFCIQVEILA. Topologically, residues 20 to 141 are extracellular; the sequence is GEFNDSAASE…YESELCCQLK (122 aa). N-linked (GlcNAc...) asparagine glycosylation occurs at Asn23. Residues 30–133 enclose the Ig-like V-type domain; that stretch reads MFIFHNGGVQ…LSREYLNIYE (104 aa). Cystine bridges form between Cys42/Cys109 and Cys63/Cys83. Asn89 is a glycosylation site (N-linked (GlcNAc...) asparagine). Residues 142-162 form a helical membrane-spanning segment; the sequence is FWLPIGCAAFVTVCVFGCVLM.

As to quaternary structure, homodimer; disulfide-linked. Interacts with ICOSLG. Interacts with PIK3R1. Interacts with TBK1; this interaction is critical for the maturation of T follicular regulatory cells. Post-translationally, N-glycosylated.

The protein resides in the cell membrane. Its function is as follows. Stimulatory receptor expressed in activated or antigen-experienced T-cells that plays an important role in the immune response. Upon binding to its ligand ICOSL expressed on antigen presenting cells (APCs), delivers costimulatory signals that enhances all basic T-cell responses to a foreign antigen, namely proliferation, secretion of lymphokines including IL10, up-regulation of molecules that mediate cell-cell interaction, and effective help for antibody secretion by B-cells. Also acts as a costimulatory receptor critical for the differentiation of T follicular regulatory cells upon immune challenges such as viral infection. Mechanistically, potentiates TCR-induced calcium flux by augmenting PLCG1 activation and actin remodeling. In addition, activates PI3K signaling pathways independently of calcium flux. Essential both for efficient interaction between T and B-cells and for normal antibody responses to T-cell dependent antigens. Prevents the apoptosis of pre-activated T-cells. Plays a critical role in CD40-mediated class switching of immunoglobin isotypes. This chain is Inducible T-cell costimulator (ICOS), found in Bos taurus (Bovine).